We begin with the raw amino-acid sequence, 249 residues long: Probable transcriptional regulatory protein ACIAD2052 (249 aa).

Belongs to the TACO1 family.

Its subcellular location is the cytoplasm. This chain is Probable transcriptional regulatory protein ACIAD2052, found in Acinetobacter baylyi (strain ATCC 33305 / BD413 / ADP1).